A 280-amino-acid polypeptide reads, in one-letter code: 4-diphosphocytidyl-2-C-methyl-D-erythritol kinase (280 aa).

Residue Lys8 is part of the active site. 91 to 101 (PVSAGLAGGST) is a binding site for ATP. Asp133 is a catalytic residue.

Belongs to the GHMP kinase family. IspE subfamily.

It carries out the reaction 4-CDP-2-C-methyl-D-erythritol + ATP = 4-CDP-2-C-methyl-D-erythritol 2-phosphate + ADP + H(+). It functions in the pathway isoprenoid biosynthesis; isopentenyl diphosphate biosynthesis via DXP pathway; isopentenyl diphosphate from 1-deoxy-D-xylulose 5-phosphate: step 3/6. Catalyzes the phosphorylation of the position 2 hydroxy group of 4-diphosphocytidyl-2C-methyl-D-erythritol. This Clostridium beijerinckii (strain ATCC 51743 / NCIMB 8052) (Clostridium acetobutylicum) protein is 4-diphosphocytidyl-2-C-methyl-D-erythritol kinase.